Reading from the N-terminus, the 505-residue chain is Sucrose porin (505 aa).

The signal sequence occupies residues Met-1 to Ala-22. The disordered stretch occupies residues Glu-44 to Lys-87. The segment covering Gln-62 to Gln-72 has biased composition (low complexity).

It belongs to the porin LamB (TC 1.B.3) family. In terms of assembly, homotrimer.

The protein localises to the cell outer membrane. Its function is as follows. Porin for sucrose uptake. The chain is Sucrose porin (scrY) from Salmonella typhimurium.